A 189-amino-acid chain; its full sequence is Peptidyl-tRNA hydrolase (189 aa).

Tyr14 is a tRNA binding site. Catalysis depends on His19, which acts as the Proton acceptor. TRNA is bound by residues Tyr64, Asn66, and Asn112.

Belongs to the PTH family. As to quaternary structure, monomer.

The protein resides in the cytoplasm. The catalysed reaction is an N-acyl-L-alpha-aminoacyl-tRNA + H2O = an N-acyl-L-amino acid + a tRNA + H(+). In terms of biological role, hydrolyzes ribosome-free peptidyl-tRNAs (with 1 or more amino acids incorporated), which drop off the ribosome during protein synthesis, or as a result of ribosome stalling. Functionally, catalyzes the release of premature peptidyl moieties from peptidyl-tRNA molecules trapped in stalled 50S ribosomal subunits, and thus maintains levels of free tRNAs and 50S ribosomes. This Dehalococcoides mccartyi (strain ATCC BAA-2266 / KCTC 15142 / 195) (Dehalococcoides ethenogenes (strain 195)) protein is Peptidyl-tRNA hydrolase.